The sequence spans 120 residues: Large ribosomal subunit protein uL18 (120 aa).

It belongs to the universal ribosomal protein uL18 family. Part of the 50S ribosomal subunit; part of the 5S rRNA/L5/L18/L25 subcomplex. Contacts the 5S and 23S rRNAs.

Its function is as follows. This is one of the proteins that bind and probably mediate the attachment of the 5S RNA into the large ribosomal subunit, where it forms part of the central protuberance. The chain is Large ribosomal subunit protein uL18 from Bacillus cereus (strain ATCC 10987 / NRS 248).